The primary structure comprises 271 residues: L-aspartate dehydrogenase (271 aa).

Residues Ala-124 and Asn-192 each contribute to the NAD(+) site. The active site involves His-222.

Belongs to the L-aspartate dehydrogenase family.

The catalysed reaction is L-aspartate + NADP(+) + H2O = oxaloacetate + NH4(+) + NADPH + H(+). It carries out the reaction L-aspartate + NAD(+) + H2O = oxaloacetate + NH4(+) + NADH + H(+). It functions in the pathway cofactor biosynthesis; NAD(+) biosynthesis; iminoaspartate from L-aspartate (dehydrogenase route): step 1/1. Specifically catalyzes the NAD or NADP-dependent dehydrogenation of L-aspartate to iminoaspartate. This Methanosarcina mazei (strain ATCC BAA-159 / DSM 3647 / Goe1 / Go1 / JCM 11833 / OCM 88) (Methanosarcina frisia) protein is L-aspartate dehydrogenase.